The following is a 104-amino-acid chain: Holotricin-3 (104 aa).

Residues 1–20 (MNKLIILGLACIIAVASAMP) form the signal peptide. Positions 22–104 (GPGDGHGGGH…HHGGYQTHGY (83 aa)) are disordered. A compositionally biased stretch (gly residues) spans 23-97 (PGDGHGGGHG…PGGHGGGHHG (75 aa)). 18 repeat units span residues 27–30 (HGGG), 31–34 (HGGG), 35–38 (HGGG), 39–42 (HGNG), 43–46 (QGGG), 47–50 (HGHG), 51–54 (PGGG), 55–58 (FGGG), 59–62 (HGGG), 63–66 (HGGG), 67–70 (GRGG), 71–74 (GGSG), 75–78 (GGGS), 79–82 (PGHG), 83–86 (AGGG), 87–90 (YPGG), 91–94 (HGGG), and 96–98 (HGG). Residues 27–98 (HGGGHGGGHG…GGHGGGHHGG (72 aa)) are 18 X 4 AA approximate tandem repeats of H-G-G-G.

This sequence to T.molitor tenecin 3.

It is found in the secreted. Functionally, has antifungal activity against C.albicans. This Holotrichia diomphalia (Korean black chafer) protein is Holotricin-3.